The chain runs to 751 residues: Photosystem I P700 chlorophyll a apoprotein A1 (751 aa).

Helical transmembrane passes span 73 to 96 (VFSA…FHGA), 159 to 182 (LYIT…FHYH), 198 to 222 (LNHH…HVSL), 294 to 312 (VAHH…GHMY), 349 to 372 (WHAQ…QHMY), 388 to 414 (LSLF…IFMV), 436 to 458 (AIIS…LYIH), and 533 to 551 (FLVH…LILL). 2 residues coordinate [4Fe-4S] cluster: Cys-575 and Cys-584. 2 consecutive transmembrane segments (helical) span residues 591 to 612 (HVFL…HFSW) and 665 to 687 (LSAY…MFLF). His-676 contributes to the chlorophyll a' binding site. The chlorophyll a site is built by Met-684 and Tyr-692. Trp-693 lines the phylloquinone pocket. A helical transmembrane segment spans residues 725 to 745 (AVGVAHYLLGGIATTWSFFLA).

The protein belongs to the PsaA/PsaB family. The PsaA/B heterodimer binds the P700 chlorophyll special pair and subsequent electron acceptors. PSI consists of a core antenna complex that captures photons, and an electron transfer chain that converts photonic excitation into a charge separation. The eukaryotic PSI reaction center is composed of at least 11 subunits. P700 is a chlorophyll a/chlorophyll a' dimer, A0 is one or more chlorophyll a, A1 is one or both phylloquinones and FX is a shared 4Fe-4S iron-sulfur center. is required as a cofactor.

It is found in the plastid. It localises to the chloroplast thylakoid membrane. The enzyme catalyses reduced [plastocyanin] + hnu + oxidized [2Fe-2S]-[ferredoxin] = oxidized [plastocyanin] + reduced [2Fe-2S]-[ferredoxin]. PsaA and PsaB bind P700, the primary electron donor of photosystem I (PSI), as well as the electron acceptors A0, A1 and FX. PSI is a plastocyanin/cytochrome c6-ferredoxin oxidoreductase, converting photonic excitation into a charge separation, which transfers an electron from the donor P700 chlorophyll pair to the spectroscopically characterized acceptors A0, A1, FX, FA and FB in turn. Oxidized P700 is reduced on the lumenal side of the thylakoid membrane by plastocyanin or cytochrome c6. The protein is Photosystem I P700 chlorophyll a apoprotein A1 of Euglena gracilis.